A 301-amino-acid polypeptide reads, in one-letter code: Heterogeneous nuclear ribonucleoprotein D-like (301 aa).

Residues 1-29 (MEDATEMSGGAEEFAEGSKINASKNQQDD) form a disordered region. RRM domains follow at residues 30-112 (GKMF…KGKE) and 115-194 (KKVF…QPKE). 2 disordered regions span residues 194–230 (EVYR…NWNQ) and 269–301 (GYGP…YQPY). Residues 212–224 (GGRGGGRGRGRGQ) are compositionally biased toward gly residues.

The protein resides in the nucleus. It is found in the cytoplasm. Its function is as follows. Acts as a transcriptional regulator. Binds DNA and RNA. This Gallus gallus (Chicken) protein is Heterogeneous nuclear ribonucleoprotein D-like (HNRNPDL).